Reading from the N-terminus, the 222-residue chain is GTP cyclohydrolase 1 (222 aa).

Positions 111, 114, and 182 each coordinate Zn(2+).

The protein belongs to the GTP cyclohydrolase I family. Homomer.

The enzyme catalyses GTP + H2O = 7,8-dihydroneopterin 3'-triphosphate + formate + H(+). It functions in the pathway cofactor biosynthesis; 7,8-dihydroneopterin triphosphate biosynthesis; 7,8-dihydroneopterin triphosphate from GTP: step 1/1. The protein is GTP cyclohydrolase 1 of Shigella boydii serotype 18 (strain CDC 3083-94 / BS512).